The following is an 84-amino-acid chain: Kunitz-type serine protease inhibitor C3 (84 aa).

The first 24 residues, 1–24 (MSSGGLLLLLGLLTLWAELTPISG), serve as a signal peptide directing secretion. Positions 31 to 81 (CYLPADPGECMAYIRSFYYDSESKKCKEFIYGGCHGNANNFPTRDKCRQTC) constitute a BPTI/Kunitz inhibitor domain. Intrachain disulfides connect Cys-31/Cys-81, Cys-40/Cys-64, and Cys-56/Cys-77.

It belongs to the venom Kunitz-type family. Expressed by the venom gland.

It is found in the secreted. Serine protease inhibitor. The protein is Kunitz-type serine protease inhibitor C3 of Daboia siamensis (Eastern Russel's viper).